Reading from the N-terminus, the 448-residue chain is MEAEGMLPPQSLSAKFEGSFAYLTVRDRLPTILTKVVDTLHRNKDNFYKEYGEEGTEAEKRAISFLSRLRNELQTDKPVLALTDNAEDTQAWNEYMERQQDLMENGQLVSWFKSPWLYVECYMYRRIQEALYMNPPMHNFDPFKEGKTQSYFESQQAIKYLCTYLQELITNMENMTEIQLRENFLKLIQVSLWGNKCDLSISAGQDNSQKLSPIDSLPDLQRFILVDDSSMVWSTLVASQGSRSSGMKHARVDIILDNAGFELVTDLVLADFLISSGLAKQIRFHGKSIPWFVSDVTKQDFEWTIKQTMAANHKWMSASGVQWKHFMKEGTWSYHDHPFWTLPHEFCDMTVDAANLYSTLQTSDLILFKGDLNYRKLTGDRKWEHTVRFDQALRGFQPAPLCSLRTLKADVQVGLQAGHAEKLSTQDPDWMTNGKYAVVQFSSPHREQ.

Mn(2+) is bound by residues Asp257 and Asn258. 257 to 258 serves as a coordination point for substrate; that stretch reads DN. Residues Glu262 and Asp295 each contribute to the S-adenosyl-L-methionine site. Residue Asp295 participates in Mn(2+) binding. Substrate contacts are provided by residues 371-375 and Lys408; that span reads DLNYR. The Subfamily III RTxK motif motif lies at 405–408; it reads RTLK.

This sequence belongs to the damage-control phosphatase family. Sugar phosphate phosphatase III subfamily. Mn(2+) is required as a cofactor. Ni(2+) serves as cofactor. In terms of processing, automethylated.

It carries out the reaction beta-D-fructose 1-phosphate + H2O = D-fructose + phosphate. The enzyme catalyses beta-D-fructose 6-phosphate = dihydroxyacetone + D-glyceraldehyde 3-phosphate. It catalyses the reaction L-glutamyl-[protein] + S-adenosyl-L-methionine = [protein]-L-glutamate 5-O-methyl ester + S-adenosyl-L-homocysteine. Functionally, metal-dependent phosphatase that shows phosphatase activity against several substrates, including fructose-1-phosphate and fructose-6-phosphate. Its preference for fructose-1-phosphate, a strong glycating agent that causes DNA damage rather than a canonical yeast metabolite, suggests a damage-control function in hexose phosphate metabolism. Has also been shown to have O-methyltransferase activity that methylates glutamate residues of target proteins to form gamma-glutamyl methyl ester residues. Possibly methylates PCNA, suggesting it is involved in the DNA damage response. This Danio rerio (Zebrafish) protein is Damage-control phosphatase ARMT1.